Consider the following 309-residue polypeptide: Ferrochelatase (309 aa).

The Fe cation site is built by H185 and E264.

The protein belongs to the ferrochelatase family.

The protein localises to the cytoplasm. It carries out the reaction heme b + 2 H(+) = protoporphyrin IX + Fe(2+). The protein operates within porphyrin-containing compound metabolism; protoheme biosynthesis; protoheme from protoporphyrin-IX: step 1/1. In terms of biological role, catalyzes the ferrous insertion into protoporphyrin IX. This Aquifex aeolicus (strain VF5) protein is Ferrochelatase.